The primary structure comprises 393 residues: METTVGTLGENTTNTFTDFFSARDGSGAETSPLPFTFSYGDYDMPSDEEEDVTNSRTFFAAKIVIGMALVGIMLVCGIGNFIFITALARYKKLRNLTNLLIANLAISDFLVAIVCCPFEMDYYVVRQLSWEHGHVLCASVNYLRTVSLYVSTNALLAIAIDRYLAIVHPLRPRMKCQTAAGLIFLVWSVSILIAIPAAYFTTETVLVIVESQEKIFCGQIWPVDQQFYYRSYFLLVFGLEFVGPVIAMTLCYARVSRELWFKAVPGFQTEQIRRRLRCRRRTVLGLVCVLSAYVLCWAPFYGFTIVRDFFPSVFVKEKHYLTAFYVVECIAMSNSMINTLCFVTVRNNTSKYLKRILRLQWRASPSGSKASADLDLRTTGIPATEEVDCIRLK.

The Extracellular segment spans residues 1–62 (METTVGTLGE…TNSRTFFAAK (62 aa)). A glycan (N-linked (GlcNAc...) asparagine) is linked at Asn-11. The helical transmembrane segment at 63 to 83 (IVIGMALVGIMLVCGIGNFIF) threads the bilayer. The Cytoplasmic segment spans residues 84-98 (ITALARYKKLRNLTN). The chain crosses the membrane as a helical span at residues 99–119 (LLIANLAISDFLVAIVCCPFE). The Extracellular portion of the chain corresponds to 120–145 (MDYYVVRQLSWEHGHVLCASVNYLRT). Cysteines 137 and 217 form a disulfide. The chain crosses the membrane as a helical span at residues 146-166 (VSLYVSTNALLAIAIDRYLAI). Residues 167-179 (VHPLRPRMKCQTA) lie on the Cytoplasmic side of the membrane. The helical transmembrane segment at 180 to 200 (AGLIFLVWSVSILIAIPAAYF) threads the bilayer. The Extracellular portion of the chain corresponds to 201–232 (TTETVLVIVESQEKIFCGQIWPVDQQFYYRSY). The helical transmembrane segment at 233–253 (FLLVFGLEFVGPVIAMTLCYA) threads the bilayer. Residues 254-282 (RVSRELWFKAVPGFQTEQIRRRLRCRRRT) lie on the Cytoplasmic side of the membrane. The helical transmembrane segment at 283 to 303 (VLGLVCVLSAYVLCWAPFYGF) threads the bilayer. Residues 304–322 (TIVRDFFPSVFVKEKHYLT) are Extracellular-facing. The helical transmembrane segment at 323–343 (AFYVVECIAMSNSMINTLCFV) threads the bilayer. At 344-393 (TVRNNTSKYLKRILRLQWRASPSGSKASADLDLRTTGIPATEEVDCIRLK) the chain is on the cytoplasmic side.

This sequence belongs to the G-protein coupled receptor 1 family. In terms of tissue distribution, widely expressed in peripheral tissues with the highest level in the spleen and moderate levels in the adipose tissues, thymus, lung, kidney, testis, uterus and small intestine.

Its subcellular location is the cell membrane. Functionally, receptor for prokineticin 1. Exclusively coupled to the G(q) subclass of heteromeric G proteins. Activation leads to mobilization of calcium, stimulation of phosphoinositide turnover and activation of p44/p42 mitogen-activated protein kinase. May play a role during early pregnancy. The protein is Prokineticin receptor 1 (Prokr1) of Rattus norvegicus (Rat).